Reading from the N-terminus, the 531-residue chain is Serine protease gd (531 aa).

An N-terminal signal peptide occupies residues 1–19 (MRLHLAAILILCIEHVTKA). Positions 155-174 (PEEEEVRKTDDKPPSTPHIQ) are disordered. Residues 246 to 531 (IESDSADSLP…FLDWITAFVI (286 aa)) form the Peptidase S1 domain. Asn-272 is a glycosylation site (N-linked (GlcNAc...) asparagine). Cys-280 and Cys-296 are disulfide-bonded. Catalysis depends on charge relay system residues His-295 and Asp-350. 2 N-linked (GlcNAc...) asparagine glycosylation sites follow: Asn-397 and Asn-445. Cys-432 and Cys-449 form a disulfide bridge. Ser-471 functions as the Charge relay system in the catalytic mechanism.

It belongs to the peptidase S1 family. Post-translationally, proteolytically activated by the protease ndl. In terms of tissue distribution, expression begins in previtellogenic stages and is seen in germline-derived nurse cells of the germarium. Expression continues throughout oogenesis with transcripts from the nurse cells accumulating in the oocytes. Most abundant in the ovaries, the level of protein decreases from the moment of egg laying and is essentially gone by 4 hours.

The protein localises to the secreted. In terms of biological role, component of the extracellular signaling pathway that establishes the dorsal-ventral pathway of the embryo. A protease cascade involving ndl, gd, snk and ea results in activation of the spz Toll receptor ligand; acts downstream of ndl but upstream of snk and ea. Activation of ea requires activation of the ndl-gd-snk protease cascade and sulfation of a vitelline membrane component by pip. Localized activation of the Toll receptor in the ventral region of the embryo defines cell identities along the dorsal-ventral continuum. The protein is Serine protease gd of Drosophila melanogaster (Fruit fly).